Reading from the N-terminus, the 125-residue chain is Large ribosomal subunit protein bL12 (125 aa).

This sequence belongs to the bacterial ribosomal protein bL12 family. In terms of assembly, homodimer. Part of the ribosomal stalk of the 50S ribosomal subunit. Forms a multimeric L10(L12)X complex, where L10 forms an elongated spine to which 2 to 4 L12 dimers bind in a sequential fashion. Binds GTP-bound translation factors.

Forms part of the ribosomal stalk which helps the ribosome interact with GTP-bound translation factors. Is thus essential for accurate translation. The chain is Large ribosomal subunit protein bL12 from Syntrophomonas wolfei subsp. wolfei (strain DSM 2245B / Goettingen).